The following is a 198-amino-acid chain: Cytochrome c oxidase assembly protein CtaG (198 aa).

The Cytoplasmic segment spans residues 1-12 (MADTGQSDRKER). Residues 13 to 35 (SNGVIVGTCLAFVVGMVGMAYAA) form a helical; Signal-anchor for type II membrane protein membrane-spanning segment. Over 36–198 (VPLYDMFCRV…QVKSRTENKL (163 aa)) the chain is Periplasmic.

The protein belongs to the COX11/CtaG family.

The protein localises to the cell inner membrane. Functionally, exerts its effect at some terminal stage of cytochrome c oxidase synthesis, probably by being involved in the insertion of the copper B into subunit I. This Sinorhizobium medicae (strain WSM419) (Ensifer medicae) protein is Cytochrome c oxidase assembly protein CtaG.